Here is a 132-residue protein sequence, read N- to C-terminus: Glycine cleavage system H protein (132 aa).

The region spanning Thr-24–Gln-106 is the Lipoyl-binding domain. Lys-65 is modified (N6-lipoyllysine).

The protein belongs to the GcvH family. In terms of assembly, the glycine cleavage system is composed of four proteins: P, T, L and H. It depends on (R)-lipoate as a cofactor.

Its function is as follows. The glycine cleavage system catalyzes the degradation of glycine. The H protein shuttles the methylamine group of glycine from the P protein to the T protein. This chain is Glycine cleavage system H protein, found in Mycobacterium avium (strain 104).